We begin with the raw amino-acid sequence, 129 residues long: M-zodatoxin-Lt8i (129 aa).

The first 20 residues, 1–20, serve as a signal peptide directing secretion; that stretch reads MKYFVVALALVAAFACIAES. A propeptide spanning residues 21-60 is cleaved from the precursor; that stretch reads KPAESEHELAEVEEENELADLEDAVWLEHLADLSDLEEAR.

The protein belongs to the cationic peptide 06 (cytoinsectotoxin) family. Expressed by the venom gland.

The protein localises to the secreted. In terms of biological role, insecticidal, cytolytic and antimicrobial peptide. Forms voltage-dependent, ion-permeable channels in membranes. At high concentration causes cell membrane lysis. The protein is M-zodatoxin-Lt8i (cit 1-6) of Lachesana tarabaevi (Spider).